We begin with the raw amino-acid sequence, 193 residues long: Bcl-2-like protein 2 (193 aa).

The residue at position 2 (Ala2) is an N-acetylalanine. Positions 9–29 match the BH4 motif; it reads DTRALVADFVGYKLRQKGYVC. The BH1 signature appears at 85–104; that stretch reads ELFQGGPNWGRLVAFFVFGA. Residues 136–151 carry the BH2 motif; that stretch reads DWIHSSGGWAEFTALY. Residue Ala177 is modified to Phosphoserine.

Belongs to the Bcl-2 family. As to quaternary structure, interacts with HIF3A (via C-terminus domain). Interacts with BOP. Expressed (at protein level) in a wide range of tissues with highest levels in brain, spinal cord, testis, pancreas, heart, spleen and mammary glands. Moderate levels found in thymus, ovary and small intestine. Not detected in salivary gland, muscle or liver. Also expressed in cell lines of myeloid, fibroblast and epithelial origin. Not detected in most lymphoid cell lines.

The protein localises to the mitochondrion membrane. In terms of biological role, promotes cell survival. Blocks dexamethasone-induced apoptosis. Mediates survival of postmitotic Sertoli cells by suppressing death-promoting activity of BAX. The polypeptide is Bcl-2-like protein 2 (BCL2L2) (Homo sapiens (Human)).